We begin with the raw amino-acid sequence, 52 residues long: DNA-directed RNA polymerase subunit Rpo12 (52 aa).

Zn(2+) is bound by residues cysteine 13, cysteine 30, and cysteine 33.

The protein belongs to the archaeal Rpo12/eukaryotic RPC10 RNA polymerase subunit family. In terms of assembly, part of the RNA polymerase complex. Zn(2+) serves as cofactor.

Its subcellular location is the cytoplasm. The enzyme catalyses RNA(n) + a ribonucleoside 5'-triphosphate = RNA(n+1) + diphosphate. DNA-dependent RNA polymerase (RNAP) catalyzes the transcription of DNA into RNA using the four ribonucleoside triphosphates as substrates. The polypeptide is DNA-directed RNA polymerase subunit Rpo12 (Pyrobaculum arsenaticum (strain DSM 13514 / JCM 11321 / PZ6)).